The primary structure comprises 2273 residues: Acetyl-CoA carboxylase, mitochondrial (2273 aa).

The N-terminal 104 residues, 1-104 (KGKTITHGQS…RGNIHKHTRL (104 aa)), are a transit peptide targeting the mitochondrion. Positions 134 to 635 (VISKILIANN…STGWLDDLIL (502 aa)) constitute a Biotin carboxylation domain. The 193-residue stretch at 292-484 (KTNFVSVPDD…LPATQLQIAM (193 aa)) folds into the ATP-grasp domain. ATP is bound at residue 332-337 (GGGGKG). Arg-459 is an active-site residue. The 75-residue stretch at 763–837 (LEAELNPTQV…EAGDVIAKLT (75 aa)) folds into the Biotinyl-binding domain. Lys-804 is modified (N6-biotinyllysine). The CoA carboxyltransferase N-terminal domain maps to 1532-1867 (PYSVKDWLQP…KRDMSPPLLE (336 aa)). Residues 1532–2187 (PYSVKDWLQP…EGQVIKRLQK (656 aa)) form a carboxyltransferase region. CoA contacts are provided by Arg-1776, Lys-2080, and Arg-2082. Positions 1871–2187 (RWDRDVDFKP…EGQVIKRLQK (317 aa)) constitute a CoA carboxyltransferase C-terminal domain.

The cofactor is biotin.

It is found in the mitochondrion. The catalysed reaction is hydrogencarbonate + acetyl-CoA + ATP = malonyl-CoA + ADP + phosphate + H(+). It carries out the reaction N(6)-biotinyl-L-lysyl-[protein] + hydrogencarbonate + ATP = N(6)-carboxybiotinyl-L-lysyl-[protein] + ADP + phosphate + H(+). The protein operates within lipid metabolism; malonyl-CoA biosynthesis; malonyl-CoA from acetyl-CoA: step 1/1. Catalyzes the rate-limiting reaction in the mitochondrial fatty acid synthesis (FAS) type II pathway. Responsible for the production of the mitochondrial malonyl-CoA, used for the biosynthesis of the cofactor lipoic acid. This protein carries three functions: biotin carboxyl carrier protein, biotin carboxylase, and carboxyltransferase. This is Acetyl-CoA carboxylase, mitochondrial (HFA1) from Saccharomyces cerevisiae (strain YJM789) (Baker's yeast).